A 324-amino-acid polypeptide reads, in one-letter code: Viral cathepsin (324 aa).

The N-terminal stretch at 1-16 is a signal peptide; sequence MNKIVLYLLVYGAVQC. A propeptide spans 17-113 (activation peptide); sequence AAYDVLKAPN…VVLDRPPDKG (97 aa). Cystine bridges form between cysteine 134–cysteine 175, cysteine 168–cysteine 208, and cysteine 263–cysteine 311. Cysteine 137 is an active-site residue. An N-linked (GlcNAc...) asparagine; by host glycan is attached at asparagine 159. Active-site residues include histidine 270 and asparagine 290.

Belongs to the peptidase C1 family. Synthesized as an inactive proenzyme and activated by proteolytic removal of the inhibitory propeptide.

It carries out the reaction Endopeptidase of broad specificity, hydrolyzing substrates of both cathepsin L and cathepsin B.. In terms of biological role, cysteine protease that plays an essential role in host liquefaction to facilitate horizontal transmission of the virus. May participate in the degradation of foreign protein expressed by the baculovirus system. This Choristoneura fumiferana nuclear polyhedrosis virus (CfMNPV) protein is Viral cathepsin (Vcath).